A 122-amino-acid chain; its full sequence is Protein FAM223B (122 aa).

It belongs to the FAM223 family.

In Homo sapiens (Human), this protein is Protein FAM223B (FAM223B).